The sequence spans 470 residues: Uronate isomerase (470 aa).

It belongs to the metallo-dependent hydrolases superfamily. Uronate isomerase family.

It carries out the reaction D-glucuronate = D-fructuronate. The catalysed reaction is aldehydo-D-galacturonate = keto-D-tagaturonate. It functions in the pathway carbohydrate metabolism; pentose and glucuronate interconversion. The sequence is that of Uronate isomerase from Salmonella paratyphi A (strain ATCC 9150 / SARB42).